The primary structure comprises 312 residues: Malate dehydrogenase (312 aa).

Residues 7–13 (GASGGIG) and Asp34 contribute to the NAD(+) site. 2 residues coordinate substrate: Arg81 and Arg87. NAD(+) is bound by residues Asn94 and 117 to 119 (ITN). Substrate-binding residues include Asn119 and Arg153. His177 functions as the Proton acceptor in the catalytic mechanism. An NAD(+)-binding site is contributed by Met227.

This sequence belongs to the LDH/MDH superfamily. MDH type 1 family. In terms of assembly, homodimer.

The enzyme catalyses (S)-malate + NAD(+) = oxaloacetate + NADH + H(+). Catalyzes the reversible oxidation of malate to oxaloacetate. The chain is Malate dehydrogenase from Actinobacillus succinogenes (strain ATCC 55618 / DSM 22257 / CCUG 43843 / 130Z).